We begin with the raw amino-acid sequence, 1440 residues long: Protein lin-15B (1440 aa).

Disordered regions lie at residues 1 to 22, 48 to 67, 618 to 660, and 738 to 769; these read MQTL…SSSS, ILRH…HLDA, PKEE…GRPI, and KDEP…PSSY. Over residues 10–22 the composition is skewed to low complexity; it reads TSNPASIPTSSSS. The span at 631 to 646 shows a compositional bias: low complexity; it reads STSSPATSSPTIIRPR. The span at 757 to 767 shows a compositional bias: polar residues; it reads NRTTASSQGPS. The THAP-type zinc finger occupies 1135–1209; it reads NPGVCCFCSK…LLKGMIPDAA (75 aa). 3 disordered regions span residues 1239 to 1281, 1298 to 1350, and 1395 to 1440; these read AIDL…EPSQ, RELS…GTSQ, and FADE…PSNE. Positions 1254 to 1264 are enriched in acidic residues; it reads TQEEEEEEEYE. Positions 1317–1329 form a DNA-binding region, a.T hook 1; the sequence is PNPRGRPRKYPKN. Residues 1396 to 1407 are compositionally biased toward acidic residues; it reads ADEEEEEEEYEE. Residues 1418-1430 constitute a DNA-binding region (a.T hook 2); sequence GRPVGRPRKDANK.

Synthetic multivulva (synMuv) class B protein. SynMuv proteins are required to repress the induction of vulval development. Acts redundantly with SynMuv class A protein lin-15A to negatively regulate vulval development. Regulates let-23 basal activity. This chain is Protein lin-15B, found in Caenorhabditis elegans.